A 557-amino-acid chain; its full sequence is MRSDMIKKGFDKAPHRSLLKATGLKDEDFDKPFIAICNSFIEIIPGHKHLNEFGKLVKEAVRAAGMVPFEFNTIGVDDGIAMGHIGMRYSLPSREIIADSVETVVNAHWFDGMICIPNCDKITPGMMMAALRINIPTVFVSGGPMAAGKTSKGDVVDLSSVFEGVGAYQSGKISEEELKDIEDHGCPSCGSCSGMFTANSMNCLCEVLGLALPGNGSILAIDPRREELIKQAAEKLKILIERDIKPRDIVTEEAIDDAFALDMAMGGSTNTVLHTLALAQEAGLDYDMNRIDAVSRRVPHLCKVSPASNWHMEDIDRAGGISAILKEMSRKEGVLHLDRITATGQTLRENIAHAEIKDKEVIHSLENPHSEEGGLRILKGNLAKDGAVIKSGATEVKRFEGPCVIFNSQDEALAGIMLGKVKKGDVVVIRYEGPRGGPGMPEMLAPTSAIAGMGLGADVALLTDGRFSGASRGISVGHISPEAAAGGTIALLEQGDIVCIDVEERLLEVRVSDEELDKRKKEWKRPEPKVKTGWLGRYAQMVTSANTGAVLKIPNFD.

Residue D78 coordinates Mg(2+). C119 contributes to the [2Fe-2S] cluster binding site. The Mg(2+) site is built by D120 and K121. Residue K121 is modified to N6-carboxylysine. C192 contacts [2Fe-2S] cluster. Mg(2+) is bound at residue E442. The active-site Proton acceptor is the S468.

Belongs to the IlvD/Edd family. Homodimer. It depends on [2Fe-2S] cluster as a cofactor. Mg(2+) is required as a cofactor.

The enzyme catalyses (2R)-2,3-dihydroxy-3-methylbutanoate = 3-methyl-2-oxobutanoate + H2O. It carries out the reaction (2R,3R)-2,3-dihydroxy-3-methylpentanoate = (S)-3-methyl-2-oxopentanoate + H2O. The protein operates within amino-acid biosynthesis; L-isoleucine biosynthesis; L-isoleucine from 2-oxobutanoate: step 3/4. It participates in amino-acid biosynthesis; L-valine biosynthesis; L-valine from pyruvate: step 3/4. Its function is as follows. Functions in the biosynthesis of branched-chain amino acids. Catalyzes the dehydration of (2R,3R)-2,3-dihydroxy-3-methylpentanoate (2,3-dihydroxy-3-methylvalerate) into 2-oxo-3-methylpentanoate (2-oxo-3-methylvalerate) and of (2R)-2,3-dihydroxy-3-methylbutanoate (2,3-dihydroxyisovalerate) into 2-oxo-3-methylbutanoate (2-oxoisovalerate), the penultimate precursor to L-isoleucine and L-valine, respectively. The chain is Dihydroxy-acid dehydratase from Bacillus cereus (strain 03BB102).